Consider the following 92-residue polypeptide: C-C motif chemokine 3 (92 aa).

The signal sequence occupies residues 1–23; it reads MQVSTAALAVLLCTMALCNQFSA. Intrachain disulfides connect C33-C57 and C34-C73.

This sequence belongs to the intercrine beta (chemokine CC) family. In terms of assembly, self-associates. Also heterodimer of MIP-1-alpha(4-69) and MIP-1-beta(3-69). Interacts with CCR1. N-terminal processed form LD78-alpha(4-69) is produced by proteolytic cleavage after secretion from HTLV1-transformed T-cells.

Its subcellular location is the secreted. Its function is as follows. Monokine with inflammatory and chemokinetic properties. Binds to CCR1, CCR4 and CCR5. One of the major HIV-suppressive factors produced by CD8+ T-cells. Recombinant MIP-1-alpha induces a dose-dependent inhibition of different strains of HIV-1, HIV-2, and simian immunodeficiency virus (SIV). In Homo sapiens (Human), this protein is C-C motif chemokine 3 (CCL3).